A 333-amino-acid polypeptide reads, in one-letter code: Homocysteine S-methyltransferase 2 (333 aa).

The Hcy-binding domain occupies 8 to 327; it reads SMKDFLKQTG…TTIRAIHKRL (320 aa). Zn(2+) is bound by residues cysteine 245, cysteine 312, and cysteine 313.

In terms of assembly, monomer. Requires Zn(2+) as cofactor. In terms of tissue distribution, expressed predominantly in roots. Expressed in rosette leaves, cauline leaves and developing seeds.

It catalyses the reaction S-methyl-L-methionine + L-homocysteine = 2 L-methionine + H(+). In terms of biological role, catalyzes methyl transfer from S-methylmethionine (SMM) to adenosyl-L-homocysteine (AdoMet). SMM degradation (by HMT-1, HMT-2 and HMT-3) and biosynthesis (by MMT1) constitute the SMM cycle in plants, which is probably required to achieve short term control of AdoMet level. The sequence is that of Homocysteine S-methyltransferase 2 (HMT-2) from Arabidopsis thaliana (Mouse-ear cress).